The primary structure comprises 226 residues: 7-cyano-7-deazaguanine synthase (226 aa).

Residue 8 to 18 (ISGGLDSTTCL) participates in ATP binding. Residues Cys-188, Cys-198, Cys-201, and Cys-204 each coordinate Zn(2+).

Belongs to the QueC family. Zn(2+) serves as cofactor.

The enzyme catalyses 7-carboxy-7-deazaguanine + NH4(+) + ATP = 7-cyano-7-deazaguanine + ADP + phosphate + H2O + H(+). The protein operates within purine metabolism; 7-cyano-7-deazaguanine biosynthesis. Functionally, catalyzes the ATP-dependent conversion of 7-carboxy-7-deazaguanine (CDG) to 7-cyano-7-deazaguanine (preQ(0)). The chain is 7-cyano-7-deazaguanine synthase from Coxiella burnetii (strain Dugway 5J108-111).